The sequence spans 400 residues: Multidrug resistance protein 2 (400 aa).

A run of 11 helical transmembrane segments spans residues 11–31 (IFIILLSNIFVAFLGIGLIIP), 46–66 (TMGYLVAAFAISQLITSPFAG), 78–98 (IILGLLIFSLSELIFGLGTHV), 106–126 (ILGGVSAAFIMPAVTAYVADI), 142–162 (AISTGFIIGPGAGGFIAGFGI), 164–184 (MPFFFASAIALIAAVTSVFIL), 213–233 (IHPVYFIAFIIVFVMAFGLSA), 253–273 (IAAIITISSIVAVVIQVLLFG), 297–317 (FVSTVMSGFLTVLLVTCFIFL), 346–366 (STYTSLGNIFGPALGGILFDL), and 368–388 (IHYPFLFAGFVMIVGLGLTMV).

Belongs to the major facilitator superfamily. TCR/Tet family.

The protein resides in the cell membrane. Functionally, energy-dependent efflux pump responsible for decreased drug accumulation in multi-drug-resistant cells. Probably uses a transmembrane proton gradient as the energy source. Causes the efflux of a variety of toxic substances, including such structurally diverse compounds as ethidium bromide, rhodamine and acridine dyes, tetraphenylphosphonium, puromycin, chloramphenicol, doxorubicin, and fluoroquinolone antibiotics. The protein is Multidrug resistance protein 2 (blt) of Bacillus subtilis (strain 168).